The sequence spans 394 residues: Elongation factor Tu 2 (394 aa).

One can recognise a tr-type G domain in the interval 10-204; sequence KPHVNVGTIG…FLDSYIPEPE (195 aa). The segment at 19-26 is G1; it reads GHVDHGKT. 19–26 provides a ligand contact to GTP; sequence GHVDHGKT. Residue Thr-26 coordinates Mg(2+). The segment at 60 to 64 is G2; the sequence is GITIN. The segment at 81–84 is G3; sequence DCPG. GTP-binding positions include 81 to 85 and 136 to 139; these read DCPGH and NKCD. Positions 136 to 139 are G4; sequence NKCD. The G5 stretch occupies residues 174–176; the sequence is SAL.

This sequence belongs to the TRAFAC class translation factor GTPase superfamily. Classic translation factor GTPase family. EF-Tu/EF-1A subfamily. Monomer.

The protein localises to the cytoplasm. The catalysed reaction is GTP + H2O = GDP + phosphate + H(+). GTP hydrolase that promotes the GTP-dependent binding of aminoacyl-tRNA to the A-site of ribosomes during protein biosynthesis. The polypeptide is Elongation factor Tu 2 (Escherichia coli O139:H28 (strain E24377A / ETEC)).